A 233-amino-acid polypeptide reads, in one-letter code: Small heat shock protein hspF (233 aa).

One can recognise a sHSP domain in the interval 129 to 233; sequence IPLFTFFEPL…ILLITVNKFL (105 aa).

It belongs to the small heat shock protein (HSP20) family.

The sequence is that of Small heat shock protein hspF (hspF-1) from Dictyostelium discoideum (Social amoeba).